The primary structure comprises 89 residues: Protein WFDC9 (89 aa).

Residues 1–23 form the signal peptide; that stretch reads MKPWILLLVMFISGVVMLLPVLG.

The protein resides in the secreted. This chain is Protein WFDC9 (WFDC9), found in Homo sapiens (Human).